The following is a 470-amino-acid chain: Annexin C1 (470 aa).

The tract at residues Met-1–Gly-143 is disordered. Over residues Gln-15–Ala-34 the composition is skewed to low complexity. Positions Pro-82–Ala-92 are enriched in pro residues. 2 stretches are compositionally biased toward low complexity: residues Pro-93–Pro-110 and Gly-128–Pro-138. Annexin repeat units lie at residues Tyr-161–Leu-232, Gly-233–Ser-304, Gln-316–Arg-388, and Asp-395–Glu-468.

This sequence belongs to the annexin family.

Its function is as follows. Does not appear to play a major role in virulence. May play a role in titan cell formation. The protein is Annexin C1 of Cryptococcus neoformans var. grubii serotype A (strain H99 / ATCC 208821 / CBS 10515 / FGSC 9487) (Filobasidiella neoformans var. grubii).